The chain runs to 375 residues: S-adenosylmethionine:tRNA ribosyltransferase-isomerase (375 aa).

The protein belongs to the QueA family. As to quaternary structure, monomer.

The protein resides in the cytoplasm. The catalysed reaction is 7-aminomethyl-7-carbaguanosine(34) in tRNA + S-adenosyl-L-methionine = epoxyqueuosine(34) in tRNA + adenine + L-methionine + 2 H(+). The protein operates within tRNA modification; tRNA-queuosine biosynthesis. Functionally, transfers and isomerizes the ribose moiety from AdoMet to the 7-aminomethyl group of 7-deazaguanine (preQ1-tRNA) to give epoxyqueuosine (oQ-tRNA). The protein is S-adenosylmethionine:tRNA ribosyltransferase-isomerase of Rickettsia typhi (strain ATCC VR-144 / Wilmington).